The sequence spans 111 residues: 2Fe-2S ferredoxin (111 aa).

The 103-residue stretch at 2–104 (PKIVILPHQD…DLVVEIPRYT (103 aa)) folds into the 2Fe-2S ferredoxin-type domain. Residues Cys42, Cys48, Cys51, and Cys87 each coordinate [2Fe-2S] cluster.

Belongs to the adrenodoxin/putidaredoxin family. The cofactor is [2Fe-2S] cluster.

Ferredoxin are iron-sulfur proteins that transfer electrons in a wide variety of metabolic reactions. Although the function of this ferredoxin is unknown it is probable that it has a role as a cellular electron transfer protein. Involved in the in vivo assembly of the Fe-S clusters in a wide variety of iron-sulfur proteins. In Escherichia coli O157:H7, this protein is 2Fe-2S ferredoxin (fdx).